We begin with the raw amino-acid sequence, 415 residues long: Histidine--tRNA ligase (415 aa).

It belongs to the class-II aminoacyl-tRNA synthetase family. As to quaternary structure, homodimer.

Its subcellular location is the cytoplasm. It carries out the reaction tRNA(His) + L-histidine + ATP = L-histidyl-tRNA(His) + AMP + diphosphate + H(+). The protein is Histidine--tRNA ligase of Clostridium botulinum (strain Kyoto / Type A2).